Consider the following 513-residue polypeptide: Catalase (513 aa).

A signal peptide spans 1 to 30 (MNPSLNAFRPGRLLVAASLTASLLSLSVQA). Catalysis depends on residues His-81 and Asn-153. A heme-binding site is contributed by Tyr-361. Residues 391–407 (DGALNAGHSTSGVNYQP) show a composition bias toward polar residues. The disordered stretch occupies residues 391-413 (DGALNAGHSTSGVNYQPSRLDPR).

Belongs to the catalase family. Requires heme as cofactor.

The protein resides in the periplasm. It catalyses the reaction 2 H2O2 = O2 + 2 H2O. Decomposes hydrogen peroxide into water and oxygen; serves to protect cells from the toxic effects of hydrogen peroxide. The protein is Catalase (katB) of Pseudomonas aeruginosa (strain ATCC 15692 / DSM 22644 / CIP 104116 / JCM 14847 / LMG 12228 / 1C / PRS 101 / PAO1).